The chain runs to 427 residues: MSIGDELVDADEVYRQARWKNQFEVLSKLPRVLQERVDAQKPVIEASGNSATPSNASRALVRHQQNPGDVGLVLNKKFADEQGHESVIERHDKLLNQTPRWHAPWHLTRVIHGHHGWVRCIAMDKVDNEWFATGSNDKTIKIWNLASGKLKVTLKAHDMTVRDLAISNRHPYMFSVSEDKTVKCWDLEKNTAIRNYHGHLSGVHTVDIHPTVDVVVTAGRDSVVKVWDIRTRLPVMTLPGHKGPITKVRCLPVDPQVISSSVDASIRLWDLVAGKSMKVLTHHQRTVRDISVHPSEFSFASACTNDIRSWLLPKGELLTNFVSQDLDVINTVSINQDDVLFAGSDNGSLTFFDYKSGHKYQTFKTKEAPGSPESERGILSSTFDGTGLRLLTGETDRTIKIWKQDETASQDTHPNLPWNPKLDSQRL.

7 WD repeats span residues 113 to 153 (GHHG…LKVT), 156 to 195 (AHDM…AIRN), 198 to 237 (GHLS…PVMT), 240 to 281 (GHKG…KVLT), 283 to 322 (HQRT…TNFV), 324 to 362 (QDLD…KYQT), and 373 to 412 (ESER…SQDT). The disordered stretch occupies residues 404–427 (QDETASQDTHPNLPWNPKLDSQRL).

This sequence belongs to the WD repeat PRL1/PRL2 family. Associated with the spliceosome.

It is found in the cytoplasm. The protein localises to the nucleus. Functionally, involved in pre-mRNA splicing and required for cell cycle progression at G2/M. The protein is Pre-mRNA-splicing factor PRP46 (PRP46) of Candida glabrata (strain ATCC 2001 / BCRC 20586 / JCM 3761 / NBRC 0622 / NRRL Y-65 / CBS 138) (Yeast).